The primary structure comprises 433 residues: tRNA-2-methylthio-N(6)-dimethylallyladenosine synthase (433 aa).

Positions K3–A118 constitute an MTTase N-terminal domain. Residues C12, C49, C81, C150, C154, and C157 each contribute to the [4Fe-4S] cluster site. The 234-residue stretch at S136–E369 folds into the Radical SAM core domain. The region spanning Q372 to L433 is the TRAM domain.

This sequence belongs to the methylthiotransferase family. MiaB subfamily. Monomer. It depends on [4Fe-4S] cluster as a cofactor.

The protein resides in the cytoplasm. The catalysed reaction is N(6)-dimethylallyladenosine(37) in tRNA + (sulfur carrier)-SH + AH2 + 2 S-adenosyl-L-methionine = 2-methylsulfanyl-N(6)-dimethylallyladenosine(37) in tRNA + (sulfur carrier)-H + 5'-deoxyadenosine + L-methionine + A + S-adenosyl-L-homocysteine + 2 H(+). Catalyzes the methylthiolation of N6-(dimethylallyl)adenosine (i(6)A), leading to the formation of 2-methylthio-N6-(dimethylallyl)adenosine (ms(2)i(6)A) at position 37 in tRNAs that read codons beginning with uridine. The chain is tRNA-2-methylthio-N(6)-dimethylallyladenosine synthase from Wolinella succinogenes (strain ATCC 29543 / DSM 1740 / CCUG 13145 / JCM 31913 / LMG 7466 / NCTC 11488 / FDC 602W) (Vibrio succinogenes).